Consider the following 112-residue polypeptide: uncharacterized protein (112 aa).

N-linked (GlcNAc...) asparagine; by host glycosylation is found at Asn29 and Asn60. The helical transmembrane segment at 66-86 (IFNGLGFILIVIFIYLLLITL) threads the bilayer.

This sequence belongs to the asfivirus B117L family.

Its subcellular location is the host membrane. The protein localises to the virion. This is an uncharacterized protein from African swine fever virus (isolate Tick/South Africa/Pretoriuskop Pr4/1996) (ASFV).